The primary structure comprises 232 residues: Sugar fermentation stimulation protein homolog (232 aa).

This sequence belongs to the SfsA family.

This Magnetococcus marinus (strain ATCC BAA-1437 / JCM 17883 / MC-1) protein is Sugar fermentation stimulation protein homolog.